A 178-amino-acid polypeptide reads, in one-letter code: Large ribosomal subunit protein uL10 (178 aa).

The protein belongs to the universal ribosomal protein uL10 family. In terms of assembly, part of the ribosomal stalk of the 50S ribosomal subunit. The N-terminus interacts with L11 and the large rRNA to form the base of the stalk. The C-terminus forms an elongated spine to which L12 dimers bind in a sequential fashion forming a multimeric L10(L12)X complex.

Forms part of the ribosomal stalk, playing a central role in the interaction of the ribosome with GTP-bound translation factors. The protein is Large ribosomal subunit protein uL10 of Dictyoglomus turgidum (strain DSM 6724 / Z-1310).